A 746-amino-acid polypeptide reads, in one-letter code: PAN2-PAN3 deadenylation complex subunit pan3 (746 aa).

Residues 7–35 form a C3H1-type zinc finger; sequence PKNQKQCKNIALHGYCRNSDKCEFSHELT. Positions 64 to 97 are enriched in low complexity; sequence QQQQQQQNSNGNGSNNTATSNNPIISPNSNIASP. Disordered regions lie at residues 64–100, 169–205, and 219–275; these read QQQQQQQNSNGNGSNNTATSNNPIISPNSNIASPLKK, DDQHLYPYGDNSVDDYEQHQYEPQPQPNNGIDPNMNN, and NASP…PSLQ. Residues 196-205 are compositionally biased toward polar residues; sequence NNGIDPNMNN. Positions 221 to 275 are enriched in low complexity; that stretch reads SPQSYQQQFQQPNPSPQSSSQQQQQQQQQQQQAVYQQQQQQQPSSQPLAQNPSLQ. Residues 351 to 610 form a pseudokinase domain region; it reads DPNDPRIKNI…NIDEVVLMIS (260 aa). ATP-binding positions include Arg-407, 457–464, and 509–510; these read EFFPGSET and SK. A coiled-coil region spans residues 611–649; sequence GRLLQENNYLHTYTDDLETELSKEYENGRLFRLVTKLGF. The knob domain stretch occupies residues 650–746; the sequence is INERPLYDMD…SELVSQKSHI (97 aa).

This sequence belongs to the protein kinase superfamily. PAN3 family. In terms of assembly, homodimer. Forms a heterotrimer with a catalytic subunit PAN2 to form the poly(A)-nuclease (PAN) deadenylation complex. Interacts (via PAM-2 motif) with poly(A)-binding protein (via PABC domain), conferring substrate specificity of the enzyme complex.

The protein resides in the cytoplasm. Regulatory subunit of the poly(A)-nuclease (PAN) deadenylation complex, one of two cytoplasmic mRNA deadenylases involved in mRNA turnover. PAN specifically shortens poly(A) tails of RNA and the activity is stimulated by poly(A)-binding protein (PABP). PAN deadenylation is followed by rapid degradation of the shortened mRNA tails by the CCR4-NOT complex. Deadenylated mRNAs are then degraded by two alternative mechanisms, namely exosome-mediated 3'-5' exonucleolytic degradation, or deadenylation-dependent mRNA decaping and subsequent 5'-3' exonucleolytic degradation by XRN1. PAN3 acts as a positive regulator for PAN activity, recruiting the catalytic subunit PAN2 to mRNA via its interaction with RNA and PABP. The chain is PAN2-PAN3 deadenylation complex subunit pan3 from Dictyostelium discoideum (Social amoeba).